A 46-amino-acid chain; its full sequence is Protein krueppel (46 aa).

3 consecutive C2H2-type zinc fingers follow at residues 1 to 4 (MRLH), 10 to 32 (YHCT…LRVH), and 38 to 46 (YACELCTSK).

The protein belongs to the krueppel C2H2-type zinc-finger protein family.

The protein localises to the nucleus. Its function is as follows. Krueppel is a gap class segmentation protein. This is Protein krueppel (Kr) from Lithobius forficatus (Centipede).